Consider the following 539-residue polypeptide: 2,3-dihydroxybenzoate-AMP ligase (539 aa).

Residue glycine 191 coordinates ATP. Substrate contacts are provided by residues 234 to 235 (HN) and serine 240. Residues glycine 307, valine 329, aspartate 413, arginine 428, and lysine 519 each contribute to the ATP site. A substrate-binding site is contributed by lysine 519.

It belongs to the ATP-dependent AMP-binding enzyme family.

The protein localises to the cytoplasm. It catalyses the reaction 2,3-dihydroxybenzoate + holo-[ACP] + ATP = 2,3-dihydroxybenzoyl-[ACP] + AMP + diphosphate. It participates in siderophore biosynthesis; bacillibactin biosynthesis. In terms of biological role, involved in the biosynthesis of the catecholic siderophore bacillibactin. Catalyzes the activation of the carboxylate group of 2,3-dihydroxy-benzoate (DHB), via ATP-dependent PPi exchange reactions, to the acyladenylate. The chain is 2,3-dihydroxybenzoate-AMP ligase from Bacillus subtilis (strain 168).